We begin with the raw amino-acid sequence, 65 residues long: Large ribosomal subunit protein bL35 (65 aa).

The protein belongs to the bacterial ribosomal protein bL35 family.

This is Large ribosomal subunit protein bL35 from Desulfitobacterium hafniense (strain DSM 10664 / DCB-2).